Consider the following 664-residue polypeptide: Macoilin (664 aa).

Helical transmembrane passes span 28 to 48, 75 to 95, 120 to 140, and 154 to 174; these read TFLY…DFVL, AFSV…LLFI, VCLP…AIRF, and FAAH…KSYV. Basic and acidic residues predominate over residues 253–265; that stretch reads REKGKEKDKDAKK. Positions 253–274 are disordered; the sequence is REKGKEKDKDAKKHNLGINNNN. The residue at position 305 (S305) is a Phosphoserine. The span at 320 to 348 shows a compositional bias: polar residues; it reads KNYKNASGVVNSSPRSHSATNGSIPSSSS. The tract at residues 320 to 367 is disordered; the sequence is KNYKNASGVVNSSPRSHSATNGSIPSSSSKNEKKQKCTSKSPSAHKDL. Residue N324 is glycosylated (N-linked (GlcNAc...) asparagine). The residue at position 332 (S332) is a Phosphoserine. N340 and N452 each carry an N-linked (GlcNAc...) asparagine glycan. Phosphoserine is present on residues S631 and S634. The tract at residues 631–664 is disordered; it reads SPLSPVSPHYSSKFVETSPSGLDPNASVYQPLKK. N655 is a glycosylation site (N-linked (GlcNAc...) asparagine).

The protein belongs to the macoilin family.

Its subcellular location is the rough endoplasmic reticulum membrane. The protein localises to the nucleus membrane. Functionally, plays a role in the regulation of neuronal activity. The polypeptide is Macoilin (MACO1) (Bos taurus (Bovine)).